The primary structure comprises 612 residues: Rhamnogalacturonan exolyase YesX (612 aa).

Residue Asn119 coordinates substrate. Ca(2+) is bound by residues Asp120, Asp125, Asp127, Asp129, Glu131, and Glu133. Positions 139, 154, and 174 each coordinate substrate. The Ca(2+) site is built by Asp189, Asp191, Asp193, Lys195, and Glu197. Substrate is bound by residues Gly205 and Arg222. Ca(2+) contacts are provided by His330, Asp336, Asp338, Asp340, Lys342, Glu344, Asp353, His354, His366, Asp368, Asp374, Asp376, Arg379, Gly381, Glu383, and Glu389. Arg419 contacts substrate. Ca(2+)-binding residues include Asp472, Asp474, Val476, and Glu478. 516–518 (NGT) provides a ligand contact to substrate. Residues Asn527, Phe529, Asp531, Arg533, Glu535, Asn576, and Ala578 each coordinate Ca(2+). A substrate-binding site is contributed by Tyr579. Asn580 serves as a coordination point for Ca(2+).

It belongs to the polysaccharide lyase 11 family. In terms of assembly, monomer. It depends on Mn(2+) as a cofactor. Zn(2+) is required as a cofactor. The cofactor is Co(2+). Ca(2+) serves as cofactor.

Its subcellular location is the secreted. It carries out the reaction Exotype eliminative cleavage of alpha-L-rhamnopyranosyl-(1-&gt;4)-alpha-D-galactopyranosyluronic acid bonds of rhamnogalacturonan I oligosaccharides containing alpha-L-rhamnopyranose at the reducing end and 4-deoxy-4,5-unsaturated D-galactopyranosyluronic acid at the non-reducing end. The products are the disaccharide 2-O-(4-deoxy-beta-L-threo-hex-4-enopyranuronosyl)-alpha-L-rhamnopyranose and the shortened rhamnogalacturonan oligosaccharide containing one 4-deoxy-4,5-unsaturated D-galactopyranosyluronic acid at the non-reducing end.. Its function is as follows. Pectinolytic enzyme that degrades type I rhamnogalacturonan from plant cell walls and releases disaccharide products. Degrades rhamnogalacturonan, polygalacturonic acid and pectic acid. Has very low activity on pectin. The protein is Rhamnogalacturonan exolyase YesX (yesX) of Bacillus subtilis (strain 168).